The sequence spans 38 residues: Small toxic protein BsrG (38 aa).

A helical membrane pass occupies residues 11–31 (INFGGLILNTVLLIFNIMMIV).

The protein localises to the cell membrane. In terms of biological role, toxic component of a type I toxin-antitoxin (TA) system; expression in the absence of cognate antisense antitoxin SR4 RNA leads to cell lysis. Induced expression causes membrane invaginations that dislocate the cell wall synthesis machinery, leading to eventual death. Unlike many type I TA systems it does not form pores. Base pairing occurs between the 3' UTRs of bsrG mRNA and SR4 RNA, which leads to initiation of degradation by RNase III (rnc) followed by the action of RNase Y (rny) and RNase R (rnr). Not toxic when expressed in E.coli. When induced during logarithmic growth it only slowly exerts its toxic effect. Expression during log growth leads to significant disturbances of cell envelope biosynthesis and cell morphology, causing cell membrane invaginations and delocalization of cell division and cell wall synthesis machinery. Cell lysis depends on mreB, lytC and lytD, suggesting expression of bsrG triggers autolysis rather than disintegration of the membrane. Additionally expression of bsrG also inhibits transcription. The chain is Small toxic protein BsrG from Bacillus subtilis (strain 168).